The primary structure comprises 429 residues: Enolase (429 aa).

Position 164 (Gln-164) interacts with (2R)-2-phosphoglycerate. Glu-206 serves as the catalytic Proton donor. Residues Asp-243, Glu-286, and Asp-313 each contribute to the Mg(2+) site. Lys-338, Arg-367, Ser-368, and Lys-389 together coordinate (2R)-2-phosphoglycerate. Lys-338 functions as the Proton acceptor in the catalytic mechanism.

Belongs to the enolase family. Mg(2+) is required as a cofactor.

It is found in the cytoplasm. Its subcellular location is the secreted. It localises to the cell surface. It catalyses the reaction (2R)-2-phosphoglycerate = phosphoenolpyruvate + H2O. Its pathway is carbohydrate degradation; glycolysis; pyruvate from D-glyceraldehyde 3-phosphate: step 4/5. In terms of biological role, catalyzes the reversible conversion of 2-phosphoglycerate (2-PG) into phosphoenolpyruvate (PEP). It is essential for the degradation of carbohydrates via glycolysis. This is Enolase from Thermotoga sp. (strain RQ2).